The sequence spans 240 residues: Inhibitor of growth protein 5 (240 aa).

The residue at position 114 (K114) is an N6-acetyllysine. Positions 116-165 (EGSDFESSGGRGLKKGRGQKEKRGSRGRGRRTSEEDTPKKKKHKGGSEFT) are disordered. S118 carries the post-translational modification Phosphoserine. Omega-N-methylarginine is present on R126. The PHD-type zinc-finger motif lies at 186–235 (PTYCLCHQVSYGEMIGCDNPDCPIEWFHFACVDLTTKPKGKWFCPRCVQE). Zn(2+)-binding residues include C189, C191, C202, C207, H213, C216, C229, and C232.

This sequence belongs to the ING family. As to quaternary structure, component of the HBO1 complex composed of KAT7/HBO1, MEAF6, ING5, and one scaffold subunit: complexes containing BRPF scaffold (BRPF1, BRD1/BRPF2 or BRPF3) direct KAT7/HBO1 specificity towards H3K14ac, while complexes containing JADE scaffold (JADE1, JADE2 and JADE3) mediate acetylation of histone H4. Component of the MOZ/MORF complex composed at least of ING5, KAT6A, KAT6B, MEAF6 and one of BRPF1, BRD1/BRPF2 and BRPF3. Interacts with H3K4me3 and to a lesser extent with H3K4me2. Interacts with EP300 and p53/TP53. Interacts with INCA1. As to expression, down-regulated in bone marrow cells in acute myeloid leukemia patients as compared with normal bone marrow cells.

The protein resides in the nucleus. It is found in the chromosome. Functionally, component of the HBO1 complex, which specifically mediates acetylation of histone H3 at 'Lys-14' (H3K14ac) and, to a lower extent, acetylation of histone H4. Component of the MOZ/MORF complex which has a histone H3 acetyltransferase activity. Through chromatin acetylation it may regulate DNA replication and may function as a transcriptional coactivator. Inhibits cell growth, induces a delay in S-phase progression and enhances Fas-induced apoptosis in an INCA1-dependent manner. The sequence is that of Inhibitor of growth protein 5 (ING5) from Homo sapiens (Human).